Reading from the N-terminus, the 135-residue chain is MIRSSVMGPTMFLVVLLLIASHQTSAWSLDGLARIEKLLSTSSSASAASPTRGQALNLKKRAILDQSCKGIFDRELFKKLDRVCDDCYNLYRKPYVAIDCREGCYQNLVFRQCIQDLQLMDQLDEYANAVQIVGK.

Residues 1–26 (MIRSSVMGPTMFLVVLLLIASHQTSA) form the signal peptide. Disulfide bonds link C68-C104, C84-C100, and C87-C113. V133 bears the Valine amide mark.

Belongs to the arthropod CHH/MIH/GIH/VIH hormone family. Produced by the medulla terminalis X-organ in the eyestalks and transported to the sinus gland where they are stored and released.

The protein resides in the secreted. Its function is as follows. Hormone found in the sinus gland of isopods and decapods which controls the blood sugar level. Has a secretagogue action over the amylase released from the midgut gland. May act as a stress hormone and may be involved in the control of molting and reproduction. This Macrobrachium lanchesteri (Freshwater prawn) protein is Crustacean hyperglycemic hormones (CHH).